Consider the following 372-residue polypeptide: Cytochrome b (372 aa).

4 helical membrane passes run 25 to 45 (FGSM…FLAI), 69 to 90 (WIMQ…YTHI), 105 to 125 (WLSG…GYVL), and 170 to 190 (FFAL…VHII). H75 and H89 together coordinate heme b. The heme b site is built by H174 and H188. H193 is an a ubiquinone binding site. 4 consecutive transmembrane segments (helical) span residues 218-238 (YKDM…LSFS), 280-300 (LGGT…PFTH), 312-332 (LSQI…WTAS), and 339-358 (FITI…ILTP).

Belongs to the cytochrome b family. In terms of assembly, the cytochrome bc1 complex contains 3 respiratory subunits (MT-CYB, CYC1 and UQCRFS1), 2 core proteins (UQCRC1 and UQCRC2) and probably 6 low-molecular weight proteins. The cofactor is heme b.

The protein resides in the mitochondrion inner membrane. Functionally, component of the ubiquinol-cytochrome c reductase complex (complex III or cytochrome b-c1 complex) that is part of the mitochondrial respiratory chain. The b-c1 complex mediates electron transfer from ubiquinol to cytochrome c. Contributes to the generation of a proton gradient across the mitochondrial membrane that is then used for ATP synthesis. The sequence is that of Cytochrome b (MT-CYB) from Naja kaouthia (Monocled cobra).